A 348-amino-acid chain; its full sequence is Protein RecA (348 aa).

Residue 67-74 coordinates ATP; the sequence is GPESSGKT.

This sequence belongs to the RecA family.

It is found in the cytoplasm. Its function is as follows. Can catalyze the hydrolysis of ATP in the presence of single-stranded DNA, the ATP-dependent uptake of single-stranded DNA by duplex DNA, and the ATP-dependent hybridization of homologous single-stranded DNAs. It interacts with LexA causing its activation and leading to its autocatalytic cleavage. The chain is Protein RecA from Amycolatopsis mediterranei (strain U-32).